A 282-amino-acid polypeptide reads, in one-letter code: NADPH-dependent 7-cyano-7-deazaguanine reductase (282 aa).

82–84 (IES) contacts substrate. Residue 84 to 85 (SK) participates in NADPH binding. Cysteine 189 (thioimide intermediate) is an active-site residue. The active-site Proton donor is the aspartate 196. 228 to 229 (HE) is a binding site for substrate. An NADPH-binding site is contributed by 257–258 (RG).

The protein belongs to the GTP cyclohydrolase I family. QueF type 2 subfamily. As to quaternary structure, homodimer.

The protein resides in the cytoplasm. The catalysed reaction is 7-aminomethyl-7-carbaguanine + 2 NADP(+) = 7-cyano-7-deazaguanine + 2 NADPH + 3 H(+). Its pathway is tRNA modification; tRNA-queuosine biosynthesis. Catalyzes the NADPH-dependent reduction of 7-cyano-7-deazaguanine (preQ0) to 7-aminomethyl-7-deazaguanine (preQ1). This Delftia acidovorans (strain DSM 14801 / SPH-1) protein is NADPH-dependent 7-cyano-7-deazaguanine reductase.